Reading from the N-terminus, the 227-residue chain is Octanoyltransferase (227 aa).

Residues 34 to 212 (RQREDGLMLL…AFAEVFPVTW (179 aa)) enclose the BPL/LPL catalytic domain. Substrate contacts are provided by residues 76–83 (RGGEVTYH), 143–145 (AIA), and 156–158 (GFA). The active-site Acyl-thioester intermediate is the Cys-174.

Belongs to the LipB family.

It is found in the cytoplasm. The catalysed reaction is octanoyl-[ACP] + L-lysyl-[protein] = N(6)-octanoyl-L-lysyl-[protein] + holo-[ACP] + H(+). It participates in protein modification; protein lipoylation via endogenous pathway; protein N(6)-(lipoyl)lysine from octanoyl-[acyl-carrier-protein]: step 1/2. Catalyzes the transfer of endogenously produced octanoic acid from octanoyl-acyl-carrier-protein onto the lipoyl domains of lipoate-dependent enzymes. Lipoyl-ACP can also act as a substrate although octanoyl-ACP is likely to be the physiological substrate. The polypeptide is Octanoyltransferase (Synechocystis sp. (strain ATCC 27184 / PCC 6803 / Kazusa)).